A 401-amino-acid polypeptide reads, in one-letter code: Chalcone synthase 1 (401 aa).

C168 is a catalytic residue.

It belongs to the thiolase-like superfamily. Chalcone/stilbene synthases family.

The catalysed reaction is (E)-4-coumaroyl-CoA + 3 malonyl-CoA + 3 H(+) = 2',4,4',6'-tetrahydroxychalcone + 3 CO2 + 4 CoA. It functions in the pathway secondary metabolite biosynthesis; flavonoid biosynthesis. The primary product of this enzyme is 4,2',4',6'-tetrahydroxychalcone (also termed naringenin-chalcone or chalcone) which can under specific conditions spontaneously isomerize into naringenin. The sequence is that of Chalcone synthase 1 (CHS1) from Sorghum bicolor (Sorghum).